Here is a 256-residue protein sequence, read N- to C-terminus: H-2 class II histocompatibility antigen, A-K alpha chain (256 aa).

A signal peptide spans 1–23 (MPRSRALILGVLALTTMLSLCGG). Positions 24–111 (EDDIEADHVG…KRSNSTPATN (88 aa)) are alpha-1. At 24–218 (EDDIEADHVG…IPAPMSELTE (195 aa)) the chain is on the extracellular side. Residues asparagine 105 and asparagine 145 are each glycosylated (N-linked (GlcNAc...) asparagine). The segment at 112–205 (EAPQATVFPK…GLEEPVLKHW (94 aa)) is alpha-2. The 93-residue stretch at 114–206 (PQATVFPKSP…LEEPVLKHWE (93 aa)) folds into the Ig-like C1-type domain. The cysteines at positions 134 and 190 are disulfide-linked. A connecting peptide region spans residues 206–218 (EPEIPAPMSELTE). Residues 219–241 (TVVCALGLSVGLVGIVVGTIFII) traverse the membrane as a helical segment. At 242 to 256 (QGLRSGGTSRHPGPL) the chain is on the cytoplasmic side.

The protein belongs to the MHC class II family.

It localises to the membrane. In Mus musculus (Mouse), this protein is H-2 class II histocompatibility antigen, A-K alpha chain (H2-Aa).